The primary structure comprises 199 residues: Recombination protein RecR (199 aa).

The C4-type zinc-finger motif lies at 57-72 (CSQCHNITDTDPCQIC). The region spanning 80–176 (TTICVVQESR…KVTRLAHGLP (97 aa)) is the Toprim domain.

The protein belongs to the RecR family.

Its function is as follows. May play a role in DNA repair. It seems to be involved in an RecBC-independent recombinational process of DNA repair. It may act with RecF and RecO. In Shouchella clausii (strain KSM-K16) (Alkalihalobacillus clausii), this protein is Recombination protein RecR.